The sequence spans 808 residues: Spindle assembly abnormal protein 4 (808 aa).

Residues 1 to 151 (MASDENIGAD…PDEPSTLVNS (151 aa)) form a disordered region. Over residues 42–54 (PPTSELSSASSPS) the composition is skewed to low complexity. Composition is skewed to polar residues over residues 61–78 (SLSN…SGIS) and 85–104 (PPTT…SPEN). Positions 113–123 (AEEHGHSGQHA) are enriched in basic and acidic residues. The span at 124–133 (EEEEDNDTDE) shows a compositional bias: acidic residues. Residues 161 to 181 (KYKNAAAEFKAFERRMDSMRS) adopt a coiled-coil conformation. 2 disordered regions span residues 187–206 (TSLA…PPTR) and 271–298 (VTAP…DENR). Residues 280-294 (MMNSSRQNPQNGNVQ) are compositionally biased toward polar residues. Positions 314 to 503 (LDRQKLEIEI…ERDDKEKEMF (190 aa)) form a coiled coil. The span at 511-529 (KTSNPVPPVLNQSVPISIT) shows a compositional bias: polar residues. The segment at 511–564 (KTSNPVPPVLNQSVPISITSNGPSRHPSSSSLTTFRKPSTSNRERGVSWADEPN) is disordered. Over residues 530–541 (SNGPSRHPSSSS) the composition is skewed to low complexity. Polar residues predominate over residues 542 to 551 (LTTFRKPSTS).

As to quaternary structure, interacts with hyls-1; leading to hyls-1 localization into newly forming centrioles.

The protein resides in the cytoplasm. Its subcellular location is the cytoskeleton. It localises to the microtubule organizing center. The protein localises to the centrosome. Its function is as follows. Required for centrosome duplication. Plays a central role in determining centrosome size. The protein is Spindle assembly abnormal protein 4 (sas-4) of Caenorhabditis elegans.